The chain runs to 621 residues: MNNTLNQHYEEKVRPCIDLIDSLRSLGVEKDLALPAIAVIGDQSSGKSSVLEALSGVALPRGSGIVTRCPLELKMKRKKEGEEWHGKISYQDHEEEIEDPSDVEKKIREAQDEMAGVGVGISDDLISLEIGSPDVPDLTLIDLPGIARVAVKGQPENIGEQIKRLIRKFIMKQETISLVVVPCNVDIATTEALKMAQEVDPEGERTLGILTKPDLVDKGTEETVVDIVHNEVIHLTKGYMIVKCRGQKEIMERVSLTEATEREKAFFKEHAHLSTLYDEGHATIPKLAEKLTLELVHHIEKSLPRLEEQIEAKLSETHAELERYGTGPPEDSAERLYFLIDKVTAFTQDAINLSTGEEMKSGVRLNVFSTLRKEFGKWKLHLERSGEIFNQRIEGEVDDYEKTYRGRELPGFINYKTFEVMVKDQIKQLEGPAVKKLKEISDAVRKVFLLLAQSSFTGFPNLLKSAKTKIEAIKQVNESTAESMLRTQFKMELIVYTQDSTYSHSLCERKREEDEDQPLTEIRSTIFSTDNHATLQEMMLHLKSYYWISSQRLADQIPMVIRYLVLQEFASQLQREMLQTLQEKDNIEQLLKEDIDIGSKRAALQSKLKRLMKARSYLVEF.

Residues 31 to 304 (DLALPAIAVI…LVHHIEKSLP (274 aa)) enclose the Dynamin-type G domain. The interval 41–48 (GDQSSGKS) is G1 motif. 41 to 48 (GDQSSGKS) contributes to the GTP binding site. Residues 66-68 (VTR) are G2 motif. Residues 142-145 (DLPG) are G3 motif. GTP contacts are provided by residues 142–146 (DLPGI) and 211–214 (TKPD). The G4 motif stretch occupies residues 211-214 (TKPD). Positions 243–246 (KCRG) are G5 motif. The region spanning 535 to 621 (LQEMMLHLKS…MKARSYLVEF (87 aa)) is the GED domain.

Belongs to the TRAFAC class dynamin-like GTPase superfamily. Dynamin/Fzo/YdjA family.

The protein resides in the cytoplasm. In terms of biological role, does not inhibit strain RB-1 of the fish pathogen, infectious hematopoietic necrosis virus (IHNV). The protein is Interferon-induced GTP-binding protein Mx1 (mx1) of Oncorhynchus mykiss (Rainbow trout).